The sequence spans 207 residues: Outer-membrane lipoprotein LolB (207 aa).

Positions 1–21 are cleaved as a signal peptide; the sequence is MPMRKRHFYRLLPLASLLLAA. The N-palmitoyl cysteine moiety is linked to residue C22. C22 carries the S-diacylglycerol cysteine lipid modification.

The protein belongs to the LolB family. As to quaternary structure, monomer.

It localises to the cell outer membrane. In terms of biological role, plays a critical role in the incorporation of lipoproteins in the outer membrane after they are released by the LolA protein. This is Outer-membrane lipoprotein LolB from Yersinia pseudotuberculosis serotype O:3 (strain YPIII).